Consider the following 54-residue polypeptide: Putative ATP synthase subunit epsilon, mitochondrial (54 aa).

It belongs to the eukaryotic ATPase epsilon family. As to quaternary structure, F-type ATPases have 2 components, CF(1) - the catalytic core - and CF(0) - the membrane proton channel. CF(1) has five subunits: alpha(3), beta(3), gamma(1), delta(1), epsilon(1). CF(0) seems to have nine subunits: a, b, c, d, e, f, g, F6 and 8 (or A6L).

It is found in the mitochondrion. The protein localises to the mitochondrion inner membrane. Mitochondrial membrane ATP synthase (F(1)F(0) ATP synthase or Complex V) produces ATP from ADP in the presence of a proton gradient across the membrane which is generated by electron transport complexes of the respiratory chain. F-type ATPases consist of two structural domains, F(1) - containing the extramembraneous catalytic core, and F(0) - containing the membrane proton channel, linked together by a central stalk and a peripheral stalk. During catalysis, ATP synthesis in the catalytic domain of F(1) is coupled via a rotary mechanism of the central stalk subunits to proton translocation. Part of the complex F(1) domain and of the central stalk which is part of the complex rotary element. Rotation of the central stalk against the surrounding alpha(3)beta(3) subunits leads to hydrolysis of ATP in three separate catalytic sites on the beta subunits. The protein is Putative ATP synthase subunit epsilon, mitochondrial of Caenorhabditis elegans.